Here is a 596-residue protein sequence, read N- to C-terminus: MTERSEALGKDGNRRWDDKSDHDDVTKIYVNYSLMGIESIRFDYVKSGKPIEGPFRGETYNTYTHTFEINHLKNEHLESVEGSYTQRGIQTLQFKTNLRISEPIGYPGKDGIKFILAVEGKKIIGFHGSTYFRLYSLGAYFTRVTPTRIEAIGGKVGTKWDDGVDQAGFTKIHVRSGQEGIQFIKFEYVDKNGRLRDGSIHGSIYRRGSPHVFEIRHVDKEYLVSVEGYYDGDGDCAVIQALRFRTNVKTSQLMGPKTGKKFRLAASGMKIVGFHGYAEKNLTSLGGYFTPIIPTKSECQGVTERSTLWDSGAFEGIRKVSVTWRSYCIRCFRINYENDGKVVKRAHGMNDDSRITDEFVVDYPYEVITSIVGTMNDSYVTSFVFKTSKGRTSRTFGERTSDSVEFVIESKGCAVVGFHGWYAPLGAGYITALGAHFYPMPLPPAAEKLEAQGGAGGVPWDDGSNFERVRKIYIGTCEVGIVSVRFLYENDIEEIVVGDHHGNKNLLRHEEFDLDNACEYLTSVEGSYDVIPGSEDVEVILMLKFTTNKRTSPCYGLDDDPTFVLHKAGHRIIGFHGKSSNMLHKLGIHVLPITDP.

The disordered stretch occupies residues 1 to 20; the sequence is MTERSEALGKDGNRRWDDKS. 4 Jacalin-type lectin domains span residues 2-143, 146-291, 294-439, and 446-592; these read TERS…YFTR, PTRI…YFTP, PTKS…HFYP, and AEKL…HVLP.

This sequence belongs to the jacalin lectin family.

The sequence is that of Jacalin-related lectin 46 (JAL46) from Arabidopsis thaliana (Mouse-ear cress).